Consider the following 740-residue polypeptide: Elongation factor 2 (740 aa).

One can recognise a tr-type G domain in the interval Ala23 to Asn264. GTP-binding positions include Ala32 to Thr39, Asp98 to His102, and Asn152 to Asp155. The residue at position 605 (His605) is a Diphthamide.

Belongs to the TRAFAC class translation factor GTPase superfamily. Classic translation factor GTPase family. EF-G/EF-2 subfamily.

It localises to the cytoplasm. Functionally, catalyzes the GTP-dependent ribosomal translocation step during translation elongation. During this step, the ribosome changes from the pre-translocational (PRE) to the post-translocational (POST) state as the newly formed A-site-bound peptidyl-tRNA and P-site-bound deacylated tRNA move to the P and E sites, respectively. Catalyzes the coordinated movement of the two tRNA molecules, the mRNA and conformational changes in the ribosome. The chain is Elongation factor 2 from Pyrobaculum islandicum (strain DSM 4184 / JCM 9189 / GEO3).